The primary structure comprises 506 residues: Aerotaxis receptor (506 aa).

Topologically, residues 1 to 166 (MSSHPYVTQQ…PSLPLRWRAR (166 aa)) are cytoplasmic. A helical transmembrane segment spans residues 167–186 (GVMTLMFILLAAMLWFVAAP). The Periplasmic portion of the chain corresponds to 187 to 190 (VVTY). The helical transmembrane segment at 191–209 (ILCALVVLLASACFEWQIV) threads the bilayer. The Cytoplasmic segment spans residues 210–506 (RPIENVAHQA…RLEDAVTVLH (297 aa)). A Methyl-accepting transducer domain is found at 263–492 (QVSSVRNGSE…ESAQVSAMVK (230 aa)).

This sequence belongs to the methyl-accepting chemotaxis (MCP) protein family.

It localises to the cell inner membrane. Its function is as follows. Signal transducer for aerotaxis. The aerotactic response is the accumulation of cells around air bubbles. The nature of the sensory stimulus detected by this protein is the proton motive force or cellular redox state. It uses a FAD prosthetic group as a redox sensor to monitor oxygen levels. This chain is Aerotaxis receptor (aer), found in Escherichia coli (strain K12).